Here is a 101-residue protein sequence, read N- to C-terminus: Large ribosomal subunit protein bL28 (101 aa).

It belongs to the bacterial ribosomal protein bL28 family.

This chain is Large ribosomal subunit protein bL28, found in Methylorubrum extorquens (strain CM4 / NCIMB 13688) (Methylobacterium extorquens).